A 439-amino-acid chain; its full sequence is Ribosomal protein uS12 methylthiotransferase RimO (439 aa).

One can recognise an MTTase N-terminal domain in the interval 2-114 (SKLYLMSLGC…VDEMILKKTN (113 aa)). [4Fe-4S] cluster contacts are provided by cysteine 11, cysteine 45, cysteine 77, cysteine 146, cysteine 150, and cysteine 153. In terms of domain architecture, Radical SAM core spans 132 to 363 (TGSNSHAFIK…VNEVIEKSFE (232 aa)).

This sequence belongs to the methylthiotransferase family. RimO subfamily. The cofactor is [4Fe-4S] cluster.

It is found in the cytoplasm. The enzyme catalyses L-aspartate(89)-[ribosomal protein uS12]-hydrogen + (sulfur carrier)-SH + AH2 + 2 S-adenosyl-L-methionine = 3-methylsulfanyl-L-aspartate(89)-[ribosomal protein uS12]-hydrogen + (sulfur carrier)-H + 5'-deoxyadenosine + L-methionine + A + S-adenosyl-L-homocysteine + 2 H(+). Its function is as follows. Catalyzes the methylthiolation of an aspartic acid residue of ribosomal protein uS12. This is Ribosomal protein uS12 methylthiotransferase RimO from Campylobacter jejuni (strain RM1221).